The sequence spans 93 residues: Protamine-3 (93 aa).

A disordered region spans residues 1–93 (MGSRCAKLGT…QSPEPKQTRS (93 aa)). Residues 37 to 57 (EGEEEEEGEEEEEEEGEEEEL) are compositionally biased toward acidic residues. Positions 81–93 (EVQQSPEPKQTRS) are enriched in polar residues. Phosphoserine is present on Ser-85.

The protein belongs to the protamine P3 family.

The protein resides in the nucleus. It localises to the chromosome. Protamines substitute for histones in the chromatin of sperm during the haploid phase of spermatogenesis. They compact sperm DNA into a highly condensed, stable and inactive complex. This is Protamine-3 (PRM3) from Bos taurus (Bovine).